A 570-amino-acid chain; its full sequence is Hydroxylamine reductase (570 aa).

Residues Cys-5, Cys-8, Cys-17, and Cys-23 each contribute to the [4Fe-4S] cluster site. Hybrid [4Fe-2O-2S] cluster-binding residues include His-266, Glu-290, Cys-334, Cys-425, Cys-453, Cys-478, Glu-513, and Lys-515. At Cys-425 the chain carries Cysteine persulfide.

This sequence belongs to the HCP family. Requires [4Fe-4S] cluster as cofactor. The cofactor is hybrid [4Fe-2O-2S] cluster.

The protein localises to the cytoplasm. The enzyme catalyses A + NH4(+) + H2O = hydroxylamine + AH2 + H(+). Its function is as follows. Catalyzes the reduction of hydroxylamine to form NH(3) and H(2)O. The chain is Hydroxylamine reductase from Clostridium botulinum (strain Okra / Type B1).